Here is a 647-residue protein sequence, read N- to C-terminus: DNA mismatch repair protein MutL (647 aa).

Belongs to the DNA mismatch repair MutL/HexB family.

Its function is as follows. This protein is involved in the repair of mismatches in DNA. It is required for dam-dependent methyl-directed DNA mismatch repair. May act as a 'molecular matchmaker', a protein that promotes the formation of a stable complex between two or more DNA-binding proteins in an ATP-dependent manner without itself being part of a final effector complex. The polypeptide is DNA mismatch repair protein MutL (Bacillus cereus (strain 03BB102)).